We begin with the raw amino-acid sequence, 218 residues long: N-(5'-phosphoribosyl)anthranilate isomerase (218 aa).

It belongs to the TrpF family.

It catalyses the reaction N-(5-phospho-beta-D-ribosyl)anthranilate = 1-(2-carboxyphenylamino)-1-deoxy-D-ribulose 5-phosphate. It functions in the pathway amino-acid biosynthesis; L-tryptophan biosynthesis; L-tryptophan from chorismate: step 3/5. This chain is N-(5'-phosphoribosyl)anthranilate isomerase, found in Rhodopseudomonas palustris (strain BisB5).